The sequence spans 250 residues: MSGHSKWSTIKRKKGANDAKRGKIFTRLIKEITVAARGGGGDPEGNPRLRSAILVAKSENMPKDNITRAIKKGTGEIAGEVYDEILYEGYGPGGVAVLVECMTDNRNRTVADIRHYFAKNNGNLGEAGCVSWMFEKKGLILVDKATITEDELMDQALEAGAEDVVEDETEFQVLTNPTELDAVRGAMEAAGIAFVDASISMLPKNVVDVTDEKVGKNLLRLLESLEDHDDVQNVHSNFDIDEELMEQLAE.

This sequence belongs to the TACO1 family.

Its subcellular location is the cytoplasm. The protein is Probable transcriptional regulatory protein DP2908 of Desulfotalea psychrophila (strain LSv54 / DSM 12343).